The chain runs to 95 residues: MKDPRDILRKPVVTEKSTSLLQDNKYTFIVDPRANKTEIKEAVEKIFKVKVEKVNTMRVKGRIKRVRNIPGKTPDYKKAIVKLRQGDKIELFEGM.

The protein belongs to the universal ribosomal protein uL23 family. In terms of assembly, part of the 50S ribosomal subunit. Contacts protein L29, and trigger factor when it is bound to the ribosome.

One of the early assembly proteins it binds 23S rRNA. One of the proteins that surrounds the polypeptide exit tunnel on the outside of the ribosome. Forms the main docking site for trigger factor binding to the ribosome. The polypeptide is Large ribosomal subunit protein uL23 (Pelotomaculum thermopropionicum (strain DSM 13744 / JCM 10971 / SI)).